The sequence spans 1302 residues: Cingulin-like protein 1 (1302 aa).

The tract at residues 1 to 554 (MELYFGEYQH…ELTQQTNEET (554 aa)) is head. Positions 37–51 (AGSYGVSIRVQGIDG) match the ZIM motif. The disordered stretch occupies residues 75–104 (PFPPPVINNLPLHSSNGSVPKENSEELQLP). A phosphoserine mark is found at Ser-112 and Ser-202. Disordered stretches follow at residues 186–209 (KKPW…EDPA), 251–305 (FTSG…TPTS), and 364–392 (PGLQ…VDSA). Residues 195–204 (PSNSQPTSPS) are compositionally biased toward polar residues. Residues 264 to 282 (AHPETKKTRPDVLPFRRQD) are compositionally biased toward basic and acidic residues. Residues Ser-283, Ser-297, and Ser-298 each carry the phosphoserine modification. Low complexity predominate over residues 296 to 305 (SSSSSTTPTS). The segment covering 366–377 (LQRRGRSGKRNR) has biased composition (basic residues). A compositionally biased stretch (basic and acidic residues) spans 378–388 (INTDDRKRSRS). Ser-388, Ser-391, and Ser-486 each carry phosphoserine. Positions 604–1258 (NSTSEVKDLL…QLNSMKKDLR (655 aa)) form a coiled coil. A compositionally biased stretch (basic and acidic residues) spans 655-664 (RSQHNEKVEE). The disordered stretch occupies residues 655–675 (RSQHNEKVEENSTLQQRLEES). Residue Ser-708 is modified to Phosphoserine. Disordered regions lie at residues 903–929 (AAQG…SEQK) and 1263–1287 (PSKV…YEAP). Positions 917 to 929 (QLSEKLKEESEQK) are enriched in basic and acidic residues. Residues 1263–1302 (PSKVLDDMDDDDDLSTDGGSLYEAPVSYTFSKDSTVASQI) are tail.

The protein belongs to the cingulin family. As to quaternary structure, homodimer or oligomer. Interacts with CD2AP and SH3BP1; probably part of a complex at cell junctions. As to expression, smooth muscle, spleen, testis, fetal brain, amygdala, corpus callosum, cerebellum, thalamus and subthalamic nucleus of adult brain.

The protein resides in the cell junction. Its subcellular location is the tight junction. Its function is as follows. May be involved in anchoring the apical junctional complex, especially tight junctions, to actin-based cytoskeletons. The protein is Cingulin-like protein 1 (CGNL1) of Homo sapiens (Human).